Consider the following 534-residue polypeptide: Probable cytochrome c oxidase subunit 1 (534 aa).

8 helical membrane passes run 35–55 (IMYI…SLLF), 76–96 (VLIT…ALFS), 97–117 (GFGN…FPRL), 120–140 (ISFW…FIDG), 165–185 (VAIF…INLI), 202–222 (PLFV…MPVL), 254–274 (LFWF…FGIV), and 286–306 (IFGY…GFIV). Histidine 81 is a Fe(II)-heme a binding site. Cu cation contacts are provided by histidine 260 and tyrosine 264. Residues 260–264 (HPEVY) constitute a cross-link (1'-histidyl-3'-tyrosine (His-Tyr)). 2 residues coordinate Cu cation: histidine 309 and histidine 310. Transmembrane regions (helical) follow at residues 320 to 340 (ALIY…IKIF) and 357 to 377 (MLFA…GIIL). Histidine 395 serves as a coordination point for heme a3. A run of 3 helical transmembrane segments spans residues 396 to 416 (FHYT…YYWF), 433 to 453 (FWIT…LGLA), and 475 to 495 (IGAG…FYTL). Fe(II)-heme a is bound at residue histidine 397.

This sequence belongs to the heme-copper respiratory oxidase family.

Its subcellular location is the cell membrane. It catalyses the reaction 4 Fe(II)-[cytochrome c] + O2 + 8 H(+)(in) = 4 Fe(III)-[cytochrome c] + 2 H2O + 4 H(+)(out). It participates in energy metabolism; oxidative phosphorylation. Its function is as follows. Cytochrome c oxidase is the component of the respiratory chain that catalyzes the reduction of oxygen to water. Subunits 1-3 form the functional core of the enzyme complex. CO I is the catalytic subunit of the enzyme. Electrons originating in cytochrome c are transferred via the copper A center of subunit 2 and heme A of subunit 1 to the bimetallic center formed by heme A3 and copper B. This is Probable cytochrome c oxidase subunit 1 (ctaD) from Rickettsia prowazekii (strain Madrid E).